The chain runs to 138 residues: Ribulose bisphosphate carboxylase small subunit (138 aa).

The protein belongs to the RuBisCO small chain family. In terms of assembly, heterohexadecamer of 8 large and 8 small subunits.

The protein resides in the plastid. It is found in the chloroplast. RuBisCO catalyzes two reactions: the carboxylation of D-ribulose 1,5-bisphosphate, the primary event in carbon dioxide fixation, as well as the oxidative fragmentation of the pentose substrate in the photorespiration process. Both reactions occur simultaneously and in competition at the same active site. Although the small subunit is not catalytic it is essential for maximal activity. The sequence is that of Ribulose bisphosphate carboxylase small subunit from Pyropia katadae (Red alga).